Consider the following 1322-residue polypeptide: Serine/threonine-protein kinase TIO (1322 aa).

The region spanning 6-256 is the Protein kinase domain; it reads YHVIELVGEG…WPALREHPFV (251 aa). ATP is bound by residues 12-20 and K35; that span reads VGEGSFGRV. Residue D127 is the Proton acceptor of the active site. The required for the binding to Kinesin-12 members stretch occupies residues 1000–1322; sequence CMEDRDLLKA…VIVAKVSGES (323 aa). ARM repeat units lie at residues 1056–1098, 1101–1140, 1143–1182, 1183–1223, 1226–1273, and 1281–1320; these read PRLA…DLSR, KAFY…NMCR, GYFY…NAAY, HNDT…NLVR, NKLC…LFSL, and QICR…KVSG.

The protein belongs to the protein kinase superfamily. Ser/Thr protein kinase family. As to quaternary structure, interacts with Kinesin-12 members KIN12A/PAKRP1 and KIN12B/PAKRP1L. Interacts with KIN7B/NACK2. As to expression, ubiquitous.

It is found in the cytoplasm. The protein localises to the cytoskeleton. The protein resides in the phragmoplast. It carries out the reaction L-seryl-[protein] + ATP = O-phospho-L-seryl-[protein] + ADP + H(+). The catalysed reaction is L-threonyl-[protein] + ATP = O-phospho-L-threonyl-[protein] + ADP + H(+). Its function is as follows. Plays a role in conventional modes of cytokinesis in meristems and during male gametogenesis but also acts in nonconventional modes of cytokinesis (cellularization) during female gametogenesis. Constitutes a signaling module in association with Kinesin-12 members that is required to support phragmoplast expansion and cell-plate growth in plant cells. The polypeptide is Serine/threonine-protein kinase TIO (TIO) (Arabidopsis thaliana (Mouse-ear cress)).